The sequence spans 108 residues: ATP-dependent Clp protease adapter protein ClpS (108 aa).

This sequence belongs to the ClpS family. As to quaternary structure, binds to the N-terminal domain of the chaperone ClpA.

Involved in the modulation of the specificity of the ClpAP-mediated ATP-dependent protein degradation. The protein is ATP-dependent Clp protease adapter protein ClpS of Leptospira borgpetersenii serovar Hardjo-bovis (strain JB197).